The sequence spans 316 residues: HPr kinase/phosphorylase (316 aa).

Active-site residues include histidine 143 and lysine 164. 158–165 (GEAGSGKS) is a binding site for ATP. A Mg(2+)-binding site is contributed by serine 165. The Proton acceptor; for phosphorylation activity. Proton donor; for dephosphorylation activity role is filled by aspartate 182. The interval 206–215 (LEVRGLGVLN) is important for the catalytic mechanism of both phosphorylation and dephosphorylation. Position 207 (glutamate 207) interacts with Mg(2+). Arginine 251 is a catalytic residue. The important for the catalytic mechanism of dephosphorylation stretch occupies residues 272-277 (PVMPGR).

This sequence belongs to the HPrK/P family. As to quaternary structure, homohexamer. The cofactor is Mg(2+).

It catalyses the reaction [HPr protein]-L-serine + ATP = [HPr protein]-O-phospho-L-serine + ADP + H(+). The catalysed reaction is [HPr protein]-O-phospho-L-serine + phosphate + H(+) = [HPr protein]-L-serine + diphosphate. Its function is as follows. Catalyzes the ATP- as well as the pyrophosphate-dependent phosphorylation of a specific serine residue in HPr, a phosphocarrier protein of the phosphoenolpyruvate-dependent sugar phosphotransferase system (PTS). HprK/P also catalyzes the pyrophosphate-producing, inorganic phosphate-dependent dephosphorylation (phosphorolysis) of seryl-phosphorylated HPr (P-Ser-HPr). This chain is HPr kinase/phosphorylase, found in Stenotrophomonas maltophilia (strain K279a).